Here is a 582-residue protein sequence, read N- to C-terminus: MHNVNNSVDIKPEVPLALDPGSPLDLRTDIRMQGSASEVTVWERQLQQELLLIQKQQQIQKQLLITEFQKQHENLVRQHQAQIQEHLKLQQELHVMKQQQEQLEKERKLELQSQERELERHRREQQVLVLRNRERTRESLTGAVASNEVKQKLQEFLLSKSTKDITLNGIPQKITQSSKLWYTASHHTSLEQSSPPLGGASSSCKISLPSPQDYRDDFPLRKTVSEPNLKVRSRLKQKVAERRSSPLLRRKEGNIMTPFKKRALELLESTASSSAPGSGPSSPNGACSALGAENGPSSLPVTTRTERWPSQSRLLGPESSVSMLNLYTSPSLPNISLGFSAASSPISAALGLQEKHVDNGAVSAVIQGLPTQLLGPVPLSVMETKVSSSHQALLQHLLQKEQLRHQKILSSGQSPVHPPSPLAMMENSPSSTRPKLPRHRPLNRTQSAPLPQSTLAQLVIQQQHQNFLEKQKQYQQQVHINKMLSKSIEQLRQPNVHLQESEEEEGEDCQEHAMQEESSPSGGVIRKHSPQNTSRSPTIPLDSHPGVIRVKEEPGASDDETMANQSSYIHQVKGRMVIQAMI.

The segment at Ser146–Pro195 is interaction with mef2. The segment covering Ser189–Lys205 has biased composition (polar residues). 4 disordered regions span residues Ser189 to Asn254, Thr270 to Leu314, Leu409 to Ser447, and Val496 to Ser567. 2 stretches are compositionally biased toward basic and acidic residues: residues Asp213–Val224 and Lys238–Gly253. Residues Thr270–Ala289 show a composition bias toward low complexity. Positions Gly295–Leu314 are enriched in polar residues.

It belongs to the histone deacetylase family. HD type 2 subfamily. In terms of assembly, homodimer. Interacts with mef2.

It is found in the nucleus. The catalysed reaction is N(6)-acetyl-L-lysyl-[histone] + H2O = L-lysyl-[histone] + acetate. Its function is as follows. Devoided of intrinsic deacetylase activity, promotes the deacetylation of lysine residues on the N-terminal part of the core histones (H2A, H2B, H3 and H4) by recruiting other histone deacetylases. Histone deacetylation gives a tag for epigenetic repression and plays an important role in transcriptional regulation, cell cycle progression and developmental events. Represses MEF2-dependent transcription. The polypeptide is Histone deacetylase 9-B (hdac9b) (Danio rerio (Zebrafish)).